The following is a 439-amino-acid chain: MTNMSWSFLTRLLEEIHNHSTFVGKVWLTVLVVFRIVLTAVGGEAIYSDEQAKFTCNTRQPGCDNVCYDAFAPLSHVRFWVFQIVVISTPSVMYLGYAVHRLARASEQERRRALRRRPGPRRAPRAHLPPPHAGWPEPADLGEEEPMLGLGEEEEEEETGAAEGAGEEAEEAGAEEACTKAVGADGKAAGTPGPTGQHDGRRRIQREGLMRVYVAQLVARAAFEVAFLVGQYLLYGFEVRPFFPCSRQPCPHVVDCFVSRPTEKTVFLLVMYVVSCLCLLLNLCEMAHLGLGSAQDAVRGRRGPPASAPAPAPRPPPCAFPAAAAGLACPPDYSLVVRAAERARAHDQNLANLALQALRDGAAAGDRDRDSSPCVGLPAASRGPPRAGAPASRTGSATSAGTVGEQGRPGTHERPGAKPRAGSEKGSASSRDGKTTVWI.

Residues 1-25 (MTNMSWSFLTRLLEEIHNHSTFVGK) lie on the Cytoplasmic side of the membrane. The helical transmembrane segment at 26–46 (VWLTVLVVFRIVLTAVGGEAI) threads the bilayer. At 47–78 (YSDEQAKFTCNTRQPGCDNVCYDAFAPLSHVR) the chain is on the extracellular side. Residues 79–99 (FWVFQIVVISTPSVMYLGYAV) traverse the membrane as a helical segment. Over 100 to 216 (HRLARASEQE…EGLMRVYVAQ (117 aa)) the chain is Cytoplasmic. The disordered stretch occupies residues 108-178 (QERRRALRRR…AEEAGAEEAC (71 aa)). Residues 112 to 125 (RALRRRPGPRRAPR) show a composition bias toward basic residues. A compositionally biased stretch (acidic residues) spans 140-174 (DLGEEEPMLGLGEEEEEEETGAAEGAGEEAEEAGA). A helical membrane pass occupies residues 217–237 (LVARAAFEVAFLVGQYLLYGF). At 238 to 265 (EVRPFFPCSRQPCPHVVDCFVSRPTEKT) the chain is on the extracellular side. The helical transmembrane segment at 266-286 (VFLLVMYVVSCLCLLLNLCEM) threads the bilayer. Topologically, residues 287-439 (AHLGLGSAQD…SRDGKTTVWI (153 aa)) are cytoplasmic. The interval 364–439 (AGDRDRDSSP…SRDGKTTVWI (76 aa)) is disordered. S371 is subject to Phosphoserine. The segment covering 378–393 (PAASRGPPRAGAPASR) has biased composition (low complexity).

The protein belongs to the connexin family. Gamma-type subfamily. In terms of assembly, a connexon is composed of a hexamer of connexins. Interacts with TJP1. In terms of tissue distribution, expressed in central nervous system, in sciatic nerve and sural nerve. Also detected in skeletal muscles.

The protein resides in the cell membrane. It is found in the cell junction. It localises to the gap junction. Its function is as follows. One gap junction consists of a cluster of closely packed pairs of transmembrane channels, the connexons, through which materials of low MW diffuse from one cell to a neighboring cell. May play a role in myelination in central and peripheral nervous systems. The sequence is that of Gap junction gamma-2 protein (GJC2) from Homo sapiens (Human).